Here is a 1919-residue protein sequence, read N- to C-terminus: Disks large homolog 5 (1919 aa).

A disordered region spans residues 98–142 (AEGAGSTYSVLSTMPSDSESSSSLSSVGTTGKAPSPPPLLTDQQV). The span at 109–123 (STMPSDSESSSSLSS) shows a compositional bias: low complexity. Phosphoserine occurs at positions 264 and 295. Positions 383–599 (LNKATAQNKD…LEKEARFRQL (217 aa)) form a coiled coil. PDZ domains are found at residues 620–710 (VVEF…RRRK) and 705–796 (VVRR…LKVF). Ser900 carries the phosphoserine modification. Disordered stretches follow at residues 927–1122 (GVGE…FRPK), 1150–1187 (QEWA…PSTT), 1201–1230 (SHRV…HQGR), 1245–1264 (EMRA…LGSS), and 1271–1306 (AERI…PQSP). Position 984 is a phosphothreonine (Thr984). The residue at position 1000 (Ser1000) is a Phosphoserine. Position 1011 is a phosphothreonine (Thr1011). The span at 1017 to 1030 (RRSDSIKFQHRLET) shows a compositional bias: basic and acidic residues. Ser1021 bears the Phosphoserine mark. The segment covering 1045–1055 (TSPPSALPPDV) has biased composition (pro residues). Thr1183 is subject to Phosphothreonine. Phosphoserine occurs at positions 1209 and 1263. Composition is skewed to low complexity over residues 1252-1264 (SNSL…LGSS) and 1284-1298 (RSVV…SHSE). A Phosphoserine modification is found at Ser1334. A PDZ 3 domain is found at 1350–1429 (HVKVQKGSEP…TITILAQYNP (80 aa)). Residues 1434–1493 (LSSHSRSSSHLDPAGTHSTLQGSGTTTPEHPSVIDPLMEQDEGPSTPPAKQSSSRIAGDA) form a disordered region. Positions 1449–1462 (THSTLQGSGTTTPE) are enriched in polar residues. Residues 1501–1582 (RVVFIKKSQL…GVRLKVQYRP (82 aa)) enclose the PDZ 4 domain. Positions 1593 to 1661 (GDSFYIRALY…PSKYVMDQEF (69 aa)) constitute an SH3 domain. Phosphoserine is present on Ser1666. A Guanylate kinase-like domain is found at 1722–1905 (DSVSLAYQRV…ICTQILAMVN (184 aa)).

It belongs to the MAGUK family. In terms of assembly, interacts with MPP1. Interacts with CTNNB1 and with the third SH3 domain of SORBS3 to form a ternary complex. Interacts (via coiled-coil domain) with MARK3. Interacts (via PDZ domain 3) with STK3/MST2 and STK4/MST1. Interacts with SCRIB. Interacts with CTNB1, SMO and (via PDZ4 or guanylate kinase-like domain) with KIF7. In terms of tissue distribution, highly expressed in normal breast tissues and low-grade breast cancer tissues (at protein level). Highly expressed in the placenta and prostate. Expressed at a lower level in the thyroid, spinal cord, trachea, adrenal gland, skeletal muscle, pancreas, heart, brain, liver and kidney. A short splice product shows more limited expression, being absent from at least the brain.

The protein localises to the cell junction. It is found in the cell membrane. The protein resides in the postsynaptic density. Its subcellular location is the cytoplasm. It localises to the cytoskeleton. The protein localises to the cilium basal body. Functionally, acts as a regulator of the Hippo signaling pathway. Negatively regulates the Hippo signaling pathway by mediating the interaction of MARK3 with STK3/4, bringing them together to promote MARK3-dependent hyperphosphorylation and inactivation of STK3 kinase activity toward LATS1. Positively regulates the Hippo signaling pathway by mediating the interaction of SCRIB with STK4/MST1 and LATS1 which is important for the activation of the Hippo signaling pathway. Involved in regulating cell proliferation, maintenance of epithelial polarity, epithelial-mesenchymal transition (EMT), cell migration and invasion. Plays an important role in dendritic spine formation and synaptogenesis in cortical neurons; regulates synaptogenesis by enhancing the cell surface localization of N-cadherin. Acts as a positive regulator of hedgehog (Hh) signaling pathway. Plays a critical role in the early point of the SMO activity cycle by interacting with SMO at the ciliary base to induce the accumulation of KIF7 and GLI2 at the ciliary tip for GLI2 activation. This Homo sapiens (Human) protein is Disks large homolog 5 (DLG5).